Consider the following 2537-residue polypeptide: Histone-lysine N-methyltransferase SETD2 (2537 aa).

The span at 1–12 shows a compositional bias: pro residues; that stretch reads MKPLPSQQPPPK. Disordered stretches follow at residues 1-31, 91-142, 156-483, 510-554, and 607-629; these read MKPLPSQQPPPKMGDFYDPEHPTPEEEENEA, TALS…ELGR, PQLA…RDLR, YTSK…STSR, and SEREKTGSPTPSNQLNDSPTFKK. The segment covering 18 to 31 has biased composition (basic and acidic residues); it reads DPEHPTPEEEENEA. Positions 91–103 are enriched in polar residues; the sequence is TALSNEKQSDSPN. At Ser132 the chain carries Phosphoserine. Low complexity predominate over residues 156–166; sequence PQLAASTTAAS. The span at 187–205 shows a compositional bias: pro residues; the sequence is PSSPPPPPPPPQASSPSPP. Ser242 bears the Phosphoserine mark. Residues 264–291 are compositionally biased toward basic and acidic residues; the sequence is LEEHTVQTLKEQADHLLQKEDSHIGKEE. Phosphoserine is present on residues Ser322, Ser324, and Ser345. Basic and acidic residues-rich tracts occupy residues 336-401, 422-433, 440-468, and 510-528; these read RSHD…ERDR, RSERSHYYDSER, PYRERTRYSRPYTDNRARESSDSEDEYKK, and YTSKLERESKRTSEHETIK. Residue Lys360 forms a Glycyl lysine isopeptide (Lys-Gly) (interchain with G-Cter in SUMO2) linkage. Ser423 carries the post-translational modification Phosphoserine. A phosphoserine mark is found at Ser532, Ser614, and Ser624. Polar residues predominate over residues 613 to 625; sequence GSPTPSNQLNDSP. Phosphothreonine is present on Thr626. Ser633 is subject to Phosphoserine. Lys637 participates in a covalent cross-link: Glycyl lysine isopeptide (Lys-Gly) (interchain with G-Cter in SUMO2). Residues Ser697, Ser707, Ser743, and Ser753 each carry the phosphoserine modification. Residues 729 to 749 form a disordered region; it reads RDSDDTCRQHNTSKSPFREME. Lys775 participates in a covalent cross-link: Glycyl lysine isopeptide (Lys-Gly) (interchain with G-Cter in SUMO2). Disordered stretches follow at residues 829-894, 941-974, 1015-1078, and 1135-1185; these read CDNR…PTLD, QEAQEEGNSILHERRGRPEIPLDEEQRGHTHISD, EDYS…HYSD, and AHAQ…EDLP. Positions 830–847 are enriched in basic and acidic residues; it reads DNREPTDRHSENTCDEYK. Residues 849-858 are compositionally biased toward polar residues; it reads SIGSTSSASH. Residues 867–883 show a composition bias toward low complexity; it reads PIGSSGISSLQSPPSGI. Over residues 951–974 the composition is skewed to basic and acidic residues; the sequence is LHERRGRPEIPLDEEQRGHTHISD. Acidic residues predominate over residues 1026 to 1037; sequence DESDSEDTESDD. Position 1077 is a phosphoserine (Ser1077). The segment covering 1150 to 1165 has biased composition (basic and acidic residues); it reads SRSDHLGHLNPEDTLR. At Ser1201 the chain carries Phosphoserine. Disordered regions lie at residues 1232–1254, 1280–1346, and 1366–1396; these read GWDFSQQERPTTTYQQPDSSYGT, WDPR…APEI, and NFEKNDIKERGPPKKRRQELESDSESDGELQ. Polar residues-rich tracts occupy residues 1235 to 1254 and 1319 to 1329; these read FSQQERPTTTYQQPDSSYGT and RSGSHFSSPSN. Basic and acidic residues predominate over residues 1366 to 1377; it reads NFEKNDIKERGP. A phosphoserine mark is found at Ser1387, Ser1389, and Ser1391. Residues 1392 to 1688 are interaction with TUBA1A; the sequence is DGELQARKKV…KKERSRKKDS (297 aa). In terms of domain architecture, AWS spans 1468–1522; the sequence is IKRMQCECTPLSKDERAQGEVACGEDCLNRLLMIECSSRCPNGDYCSNRRFQRKQ. Residues Cys1473, Cys1475, Cys1490, Cys1494, Cys1503, Cys1507, and Cys1513 each contribute to the Zn(2+) site. In terms of domain architecture, SET spans 1524 to 1641; sequence ADVEVILTEK…SGSELTFDYQ (118 aa). S-adenosyl-L-methionine-binding positions include 1534–1536, 1577–1579, and 1602–1603; these read KGW, HYY, and NH. Cys1605 provides a ligand contact to Zn(2+). The Post-SET domain occupies 1648 to 1664; it reads EAQKCFCGSANCRGYLG. Gln1650 is a binding site for S-adenosyl-L-methionine. Position 1652 (Cys1652) interacts with Zn(2+). Residue Phe1653 participates in S-adenosyl-L-methionine binding. 2 residues coordinate Zn(2+): Cys1654 and Cys1659. 3 positions are modified to phosphoserine: Ser1670, Ser1818, and Ser1819. Residues 1806 to 1848 form a disordered region; the sequence is TAVPQLSEGDGYSSENTSRAHTPLNTPDPSAKPSTEMDTDTPK. A compositionally biased stretch (polar residues) spans 1818–1833; the sequence is SSENTSRAHTPLNTPD. Thr1827 and Thr1846 each carry phosphothreonine. A phosphoserine mark is found at Ser1862 and Ser1926. Disordered regions lie at residues 1914 to 1981 and 1993 to 2110; these read SEAT…DISD and LKEV…AQKQ. Over residues 1934–1946 the composition is skewed to basic and acidic residues; it reads TEPKDSNGTKLEE. Residues 1947 to 1964 show a composition bias toward acidic residues; that stretch reads TIAEETPSQDEEEGVSDV. Phosphoserine is present on residues Ser1954, Ser1962, and Ser1969. Basic and acidic residues-rich tracts occupy residues 1965-1978, 1993-2020, and 2032-2045; these read ESERSQEPPDKTVD, LKEVYRIPKKSQTEKESTVAERGRDAAA, and RSRERDPDKQSQNK. 2 positions are modified to phosphoserine: Ser2053 and Ser2055. Basic and acidic residues-rich tracts occupy residues 2063–2073 and 2084–2108; these read RGTKRPDDRYD and KDRNKLSTEERRKLFEQEVAQREAQ. Positions 2090–2119 form a coiled coil; it reads STEERRKLFEQEVAQREAQKQQQQMQNLGM. The low charge region stretch occupies residues 2110-2339; the sequence is QQQQMQNLGM…APGQPQSLQP (230 aa). The WW domain maps to 2362-2395; sequence IVLPPNWKTARDPEGKIYYYHVITRQTQWDPPTW. The disordered stretch occupies residues 2412–2438; the sequence is LGTPTYDENPMKTSKKPKTAEADTSSE. An interaction with POLR2A region spans residues 2430–2537; that stretch reads TAEADTSSEL…YKPKEDTELE (108 aa).

Belongs to the class V-like SAM-binding methyltransferase superfamily. Histone-lysine methyltransferase family. SET2 subfamily. Specifically interacts with hyperphosphorylated C-terminal domain (CTD) of RNA polymerase II large subunit (POLR2A): binds to CTD heptad repeats doubly phosphorylated on 'Ser-2' and 'Ser-5' of each heptad. Interacts with HTT. Interacts with IWS1. Interacts with p53/TP53; leading to regulate p53/TP53 target genes. Component of a complex with HNRNPL. Interacts with TUBA1A; the interaction is independent on alpha-tubulin acetylation on 'Lys-40'. May be automethylated.

The protein localises to the nucleus. It localises to the chromosome. It carries out the reaction L-lysyl(36)-[histone H3] + 3 S-adenosyl-L-methionine = N(6),N(6),N(6)-trimethyl-L-lysyl(36)-[histone H3] + 3 S-adenosyl-L-homocysteine + 3 H(+). It catalyses the reaction L-lysyl-[protein] + S-adenosyl-L-methionine = N(6)-methyl-L-lysyl-[protein] + S-adenosyl-L-homocysteine + H(+). The catalysed reaction is L-lysyl-[protein] + 3 S-adenosyl-L-methionine = N(6),N(6),N(6)-trimethyl-L-lysyl-[protein] + 3 S-adenosyl-L-homocysteine + 3 H(+). Specifically inhibited by sinefungin derivatives. Its function is as follows. Histone methyltransferase that specifically trimethylates 'Lys-36' of histone H3 (H3K36me3) using dimethylated 'Lys-36' (H3K36me2) as substrate. It is capable of trimethylating unmethylated H3K36 (H3K36me0) in vitro. Represents the main enzyme generating H3K36me3, a specific tag for epigenetic transcriptional activation. Plays a role in chromatin structure modulation during elongation by coordinating recruitment of the FACT complex and by interacting with hyperphosphorylated POLR2A. Acts as a key regulator of DNA mismatch repair in G1 and early S phase by generating H3K36me3, a mark required to recruit MSH6 subunit of the MutS alpha complex: early recruitment of the MutS alpha complex to chromatin to be replicated allows a quick identification of mismatch DNA to initiate the mismatch repair reaction. Required for DNA double-strand break repair in response to DNA damage: acts by mediating formation of H3K36me3, promoting recruitment of RAD51 and DNA repair via homologous recombination (HR). Acts as a tumor suppressor. H3K36me3 also plays an essential role in the maintenance of a heterochromatic state, by recruiting DNA methyltransferase DNMT3A. H3K36me3 is also enhanced in intron-containing genes, suggesting that SETD2 recruitment is enhanced by splicing and that splicing is coupled to recruitment of elongating RNA polymerase. Required during angiogenesis. Required for endoderm development by promoting embryonic stem cell differentiation toward endoderm: acts by mediating formation of H3K36me3 in distal promoter regions of FGFR3, leading to regulate transcription initiation of FGFR3. In addition to histones, also mediates methylation of other proteins, such as tubulins and STAT1. Trimethylates 'Lys-40' of alpha-tubulins such as TUBA1B (alpha-TubK40me3); alpha-TubK40me3 is required for normal mitosis and cytokinesis and may be a specific tag in cytoskeletal remodeling. Involved in interferon-alpha-induced antiviral defense by mediating both monomethylation of STAT1 at 'Lys-525' and catalyzing H3K36me3 on promoters of some interferon-stimulated genes (ISGs) to activate gene transcription. The chain is Histone-lysine N-methyltransferase SETD2 from Mus musculus (Mouse).